The sequence spans 422 residues: Histidine--tRNA ligase (422 aa).

Belongs to the class-II aminoacyl-tRNA synthetase family. As to quaternary structure, homodimer.

It is found in the cytoplasm. It carries out the reaction tRNA(His) + L-histidine + ATP = L-histidyl-tRNA(His) + AMP + diphosphate + H(+). In Lysinibacillus sphaericus (strain C3-41), this protein is Histidine--tRNA ligase.